The primary structure comprises 483 residues: Cysteine--tRNA ligase (483 aa).

C27 serves as a coordination point for Zn(2+). Positions 29–39 (ITAYDYCHIGH) match the 'HIGH' region motif. Zn(2+)-binding residues include C208, H231, and E235. A 'KMSKS' region motif is present at residues 263–267 (KMSKS). Residue K266 participates in ATP binding.

This sequence belongs to the class-I aminoacyl-tRNA synthetase family. Monomer. Zn(2+) is required as a cofactor.

It is found in the cytoplasm. The catalysed reaction is tRNA(Cys) + L-cysteine + ATP = L-cysteinyl-tRNA(Cys) + AMP + diphosphate. This is Cysteine--tRNA ligase from Desulfovibrio desulfuricans (strain ATCC 27774 / DSM 6949 / MB).